An 833-amino-acid polypeptide reads, in one-letter code: Heat shock transcription factor (833 aa).

At methionine 1 the chain carries N-acetylmethionine. Positions 1-16 (MNNAANTGTTNESNVS) are enriched in polar residues. Disordered stretches follow at residues 1–31 (MNNA…NDDD) and 62–92 (NPSL…STHL). The span at 69-80 (SAASPVPSSSFF) shows a compositional bias: low complexity. Position 97 is a phosphothreonine (threonine 97). Residues 150–161 (PSSGTTNAQPRQ) are compositionally biased toward polar residues. Disordered regions lie at residues 150–170 (PSSG…QSHK) and 277–309 (GSSN…NNSN). Residues 170–259 (KSRPAFVNKL…SDDKWQFENE (90 aa)) mediate DNA binding. The segment at 260-280 (NFIRGREDLLEKIIRQKGSSN) is flexible linker. Positions 277-296 (GSSNNHNSPSGNGNPANGSN) are enriched in low complexity. An involved in trimerization region spans residues 350-403 (ELEQIKYNQIAISKDLLRINKDNELLWQENMMARERHRTQQQALEKMFRFLTSI). Residues 447 to 457 (SNDSFINDDRN) show a composition bias toward basic and acidic residues. The interval 447 to 493 (SNDSFINDDRNSFTNATTNARNNMSPNNDDNSIDTASTNTTNRKKNI) is disordered. Serine 450, serine 458, serine 471, serine 478, and serine 528 each carry phosphoserine. A compositionally biased stretch (polar residues) spans 458-487 (SFTNATTNARNNMSPNNDDNSIDTASTNTT). A compositionally biased stretch (polar residues) spans 542–554 (RANSSTSSENPSL). Disordered regions lie at residues 542 to 626 (RANS…HNES), 657 to 765 (GYPN…RVSP), and 778 to 799 (SDNL…APEN). The segment covering 571–580 (PFDDEEEEET) has biased composition (acidic residues). A compositionally biased stretch (polar residues) spans 588–600 (RDPNNQTSENTFD). Basic and acidic residues predominate over residues 610–626 (DDLKKDSHTNDNKHNES). The segment covering 660 to 675 (NKSFNNKTSSTNTNSN) has biased composition (low complexity). The segment covering 676–687 (MESAVNVNSPGF) has biased composition (polar residues). Low complexity predominate over residues 697-713 (SNSPNSVHSVPSNGSGS). Polar residues-rich tracts occupy residues 727-739 (ASTS…NGSG), 752-763 (NDNNTSEGSTRV), and 778-794 (SDNL…TQAD).

It belongs to the HSF family. As to quaternary structure, homotrimer. Homotrimerization increases the affinity of HSF1 to DNA. Post-translationally, exhibits temperature-dependent phosphorylation that activates the transcriptional capacity.

The protein localises to the nucleus. Its function is as follows. DNA-binding transcription factor that specifically binds heat shock promoter elements (HSE) and activates transcription. This is Heat shock transcription factor from Saccharomyces cerevisiae (strain ATCC 204508 / S288c) (Baker's yeast).